The chain runs to 436 residues: Xaa-Arg dipeptidase (436 aa).

Belongs to the peptidase M20A family.

The enzyme catalyses beta-alanyl-L-lysine + H2O = beta-alanine + L-lysine. It catalyses the reaction beta-alanyl-L-ornithine + H2O = beta-alanine + L-ornithine. It carries out the reaction N(2)-(4-aminobutanoyl)-L-lysine + H2O = 4-aminobutanoate + L-lysine. The catalysed reaction is N(2)-(4-aminobutanoyl)-L-ornithine + H2O = 4-aminobutanoate + L-ornithine. The enzyme catalyses N(2)-(4-aminobutanoyl)-L-arginine + H2O = 4-aminobutanoate + L-arginine. Functionally, catalyzes the peptide bond hydrolysis in dipeptides having basic amino acids lysine, ornithine or arginine at C-terminus. Postulated to function in a metabolite repair mechanism by eliminating alternate dipeptide by-products formed during carnosine synthesis. In Homo sapiens (Human), this protein is Xaa-Arg dipeptidase.